Reading from the N-terminus, the 430-residue chain is Enolase (430 aa).

(2R)-2-phosphoglycerate is bound at residue Gln162. Glu204 acts as the Proton donor in catalysis. Positions 241, 283, and 310 each coordinate Mg(2+). The (2R)-2-phosphoglycerate site is built by Lys335, Arg364, Ser365, and Lys386. Lys335 serves as the catalytic Proton acceptor.

The protein belongs to the enolase family. Requires Mg(2+) as cofactor.

The protein resides in the cytoplasm. It localises to the secreted. Its subcellular location is the cell surface. It catalyses the reaction (2R)-2-phosphoglycerate = phosphoenolpyruvate + H2O. Its pathway is carbohydrate degradation; glycolysis; pyruvate from D-glyceraldehyde 3-phosphate: step 4/5. In terms of biological role, catalyzes the reversible conversion of 2-phosphoglycerate (2-PG) into phosphoenolpyruvate (PEP). It is essential for the degradation of carbohydrates via glycolysis. The chain is Enolase from Mycobacteroides abscessus (strain ATCC 19977 / DSM 44196 / CCUG 20993 / CIP 104536 / JCM 13569 / NCTC 13031 / TMC 1543 / L948) (Mycobacterium abscessus).